The following is a 1101-amino-acid chain: Leucine-rich repeat receptor-like serine/threonine-protein kinase At1g17230 (1101 aa).

The first 23 residues, 1–23, serve as a signal peptide directing secretion; that stretch reads MRGRICFLAIVILCSFSFILVRS. Residues 24–734 are Extracellular-facing; that stretch reads LNEEGRVLLE…WLINGSQRQK (711 aa). Asn-39, Asn-57, Asn-78, and Asn-97 each carry an N-linked (GlcNAc...) asparagine glycan. LRR repeat units follow at residues 66–90, 91–115, 117–137, 138–162, 163–186, 188–210, 211–234, 235–258, 260–282, 283–306, 308–329, 330–354, 355–379, 381–402, 403–426, 427–450, 451–474, 476–498, 499–522, 524–546, 548–569, 570–593, 595–618, 619–643, 644–667, and 669–692; these read LRTV…ICKL, HGLR…SLCR, LEVL…QLTM, IITL…IGNL, SSLQ…MAKL, QLRI…ISGC, ESLK…LEKL, QNLT…VGNI, RLEV…IGKL, TKMK…IGNL, DAAE…EFGH, ILNL…LGEL, TLLE…QFLP, LVDL…IGFY, SNFS…FCRF, QTLI…LKTC, KSLT…LFNL, NLTA…LGKL, KNLE…IGNL, KIVG…LGSC, TIQR…ELGQ, LVYL…SFGD, TRLM…LGKL, TSLQ…LGNL, QMLE…IGNL, and SLLI…VFQR. Residues Asn-161 and Asn-174 are each glycosylated (N-linked (GlcNAc...) asparagine). N-linked (GlcNAc...) asparagine glycosylation is found at Asn-236 and Asn-257. Asn-368 is a glycosylation site (N-linked (GlcNAc...) asparagine). Residue Asn-404 is glycosylated (N-linked (GlcNAc...) asparagine). N-linked (GlcNAc...) asparagine glycosylation is found at Asn-476, Asn-490, Asn-510, Asn-521, and Asn-529. N-linked (GlcNAc...) asparagine glycans are attached at residues Asn-626 and Asn-631. 2 N-linked (GlcNAc...) asparagine glycosylation sites follow: Asn-674 and Asn-728. Residues 735 to 755 form a helical membrane-spanning segment; sequence ILTITCIVIGSVFLITFLGLC. Residues 756-1101 are Cytoplasmic-facing; that stretch reads WTIKRREPAF…LEEANSSKEI (346 aa). Phosphothreonine occurs at positions 788 and 796. Residues 799–1081 enclose the Protein kinase domain; the sequence is FSEDVVLGRG…ITEARGSSSL (283 aa). Residues 805-813 and Lys-827 contribute to the ATP site; that span reads LGRGACGTV. 2 positions are modified to phosphotyrosine: Tyr-874 and Tyr-913. Residue Asp-926 is the Proton acceptor of the active site. Phosphoserine is present on Ser-960. Residues Tyr-968 and Tyr-975 each carry the phosphotyrosine modification. Thr-976 bears the Phosphothreonine mark. The tract at residues 1076-1101 is disordered; the sequence is RGSSSLSSSSITSETPLEEANSSKEI. Positions 1078-1088 are enriched in low complexity; that stretch reads SSSLSSSSITS.

It belongs to the protein kinase superfamily. Ser/Thr protein kinase family.

The protein resides in the cell membrane. It catalyses the reaction L-seryl-[protein] + ATP = O-phospho-L-seryl-[protein] + ADP + H(+). The catalysed reaction is L-threonyl-[protein] + ATP = O-phospho-L-threonyl-[protein] + ADP + H(+). This is Leucine-rich repeat receptor-like serine/threonine-protein kinase At1g17230 from Arabidopsis thaliana (Mouse-ear cress).